Consider the following 146-residue polypeptide: Large ribosomal subunit protein uL13 (146 aa).

It belongs to the universal ribosomal protein uL13 family. In terms of assembly, part of the 50S ribosomal subunit.

This protein is one of the early assembly proteins of the 50S ribosomal subunit, although it is not seen to bind rRNA by itself. It is important during the early stages of 50S assembly. The polypeptide is Large ribosomal subunit protein uL13 (Bdellovibrio bacteriovorus (strain ATCC 15356 / DSM 50701 / NCIMB 9529 / HD100)).